Consider the following 400-residue polypeptide: Cytoplasmic polyadenylated homeobox-like protein 2 (400 aa).

Residues 1 to 29 (MSSQAFPAEEDHHNEERQTKKKRKTKHRH) are disordered. The segment covering 9-18 (EEDHHNEERQ) has biased composition (basic and acidic residues). A compositionally biased stretch (basic residues) spans 19-29 (TKKKRKTKHRH). The homeobox DNA-binding region spans 24–83 (KTKHRHKFSEELLQELKEIFGENGYPDFTTRKTLANKFDCPVNVINNWFQNNRARLPPEE).

It is found in the nucleus. This is Cytoplasmic polyadenylated homeobox-like protein 2 from Homo sapiens (Human).